Here is a 429-residue protein sequence, read N- to C-terminus: Adenylosuccinate synthetase (429 aa).

Residues 12–18 and 40–42 each bind GTP; these read GDEGKGK and GHT. The active-site Proton acceptor is Asp13. Mg(2+) is bound by residues Asp13 and Gly40. IMP-binding positions include 13–16, 38–41, Thr129, Arg143, Gln223, Thr238, and Arg302; these read DEGK and NAGH. His41 functions as the Proton donor in the catalytic mechanism. 298-304 lines the substrate pocket; that stretch reads TVTGRKR. GTP-binding positions include Arg304, 330-332, and 412-414; these read KLD and STS.

The protein belongs to the adenylosuccinate synthetase family. Homodimer. It depends on Mg(2+) as a cofactor.

The protein resides in the cytoplasm. The enzyme catalyses IMP + L-aspartate + GTP = N(6)-(1,2-dicarboxyethyl)-AMP + GDP + phosphate + 2 H(+). Its pathway is purine metabolism; AMP biosynthesis via de novo pathway; AMP from IMP: step 1/2. Plays an important role in the de novo pathway of purine nucleotide biosynthesis. Catalyzes the first committed step in the biosynthesis of AMP from IMP. The sequence is that of Adenylosuccinate synthetase from Sphingopyxis alaskensis (strain DSM 13593 / LMG 18877 / RB2256) (Sphingomonas alaskensis).